Here is a 390-residue protein sequence, read N- to C-terminus: 5-hydroxytryptamine receptor 1B (390 aa).

At 1–46 (MEEPGAQCAPPXPAGSETWVPQANLSSAPSQNCSAKDYIYQDSIAL) the chain is on the extracellular side. Asn24 and Asn32 each carry an N-linked (GlcNAc...) asparagine glycan. The chain crosses the membrane as a helical span at residues 47–72 (PWKVLLVMLLALITLATTLSNAFVIA). Residues 73–86 (TVYRTRKLHTPANY) lie on the Cytoplasmic side of the membrane. The helical transmembrane segment at 87 to 111 (LIASLAVTDLLVSILVMPISTMYTV) threads the bilayer. Topologically, residues 112 to 119 (TGRWTLGQ) are extracellular. A helical membrane pass occupies residues 120–145 (VVCDFWLSSDITCCTASILHLCVIAL). An intrachain disulfide couples Cys122 to Cys199. Ergotamine contacts are provided by Asp129 and Thr134. Positions 146-148 (DRY) match the DRY motif; important for ligand-induced conformation changes and signaling motif. Residues 146–165 (DRYWAITDAVEYSAKRTPKR) lie on the Cytoplasmic side of the membrane. Residues 166–184 (AAVMIALVWVFSISISLPP) traverse the membrane as a helical segment. The Extracellular portion of the chain corresponds to 185-205 (FFWRQAKAEEEVSECVVNTDH). Val201 contacts ergotamine. Residues 206-229 (ILYTVYSTVGAFYFPTLLLIALYG) traverse the membrane as a helical segment. Residues 230–315 (RIYVEARSRI…AARERKATKT (86 aa)) lie on the Cytoplasmic side of the membrane. The segment covering 259-272 (DSPGSTSSVTSINS) has biased composition (polar residues). The disordered stretch occupies residues 259-281 (DSPGSTSSVTSINSRVPDVPSES). The helical transmembrane segment at 316 to 337 (LGIILGAFIVCWLPFFIISLVM) threads the bilayer. The Extracellular segment spans residues 338-347 (PICKDACWFH). A helical transmembrane segment spans residues 348 to 370 (LAIFDFFTWLGYLNSLINPIIYT). The NPxxY motif; important for ligand-induced conformation changes and signaling motif lies at 365–369 (NPIIY). Residues 371-390 (MSNEDFKQAFHKLIRFKCTS) are Cytoplasmic-facing. Residue Cys388 is the site of S-palmitoyl cysteine attachment.

Belongs to the G-protein coupled receptor 1 family. As to quaternary structure, homodimer. Heterodimer with HTR1D. Post-translationally, phosphorylated. Desensitization of the receptor may be mediated by its phosphorylation. In terms of processing, palmitoylated.

The protein localises to the cell membrane. Functionally, G-protein coupled receptor for 5-hydroxytryptamine (serotonin). Also functions as a receptor for ergot alkaloid derivatives, various anxiolytic and antidepressant drugs and other psychoactive substances, such as lysergic acid diethylamide (LSD). Ligand binding causes a conformation change that triggers signaling via guanine nucleotide-binding proteins (G proteins) and modulates the activity of downstream effectors, such as adenylate cyclase. HTR1B is coupled to G(i)/G(o) G alpha proteins and mediates inhibitory neurotransmission by inhibiting adenylate cyclase activity. Arrestin family members inhibit signaling via G proteins and mediate activation of alternative signaling pathways. Regulates the release of 5-hydroxytryptamine, dopamine and acetylcholine in the brain, and thereby affects neural activity, nociceptive processing, pain perception, mood and behavior. Besides, plays a role in vasoconstriction of cerebral arteries. The polypeptide is 5-hydroxytryptamine receptor 1B (HTR1B) (Gorilla gorilla gorilla (Western lowland gorilla)).